Consider the following 359-residue polypeptide: 3-dehydroquinate synthase (359 aa).

Residues 71–76 (DGEQYK), 105–109 (GVIGD), 129–130 (TT), Lys142, Lys151, and 169–172 (CLST) contribute to the NAD(+) site. Positions 184, 247, and 264 each coordinate Zn(2+).

The protein belongs to the sugar phosphate cyclases superfamily. Dehydroquinate synthase family. Co(2+) is required as a cofactor. Zn(2+) serves as cofactor. The cofactor is NAD(+).

The protein resides in the cytoplasm. It carries out the reaction 7-phospho-2-dehydro-3-deoxy-D-arabino-heptonate = 3-dehydroquinate + phosphate. It participates in metabolic intermediate biosynthesis; chorismate biosynthesis; chorismate from D-erythrose 4-phosphate and phosphoenolpyruvate: step 2/7. In terms of biological role, catalyzes the conversion of 3-deoxy-D-arabino-heptulosonate 7-phosphate (DAHP) to dehydroquinate (DHQ). The protein is 3-dehydroquinate synthase of Shewanella halifaxensis (strain HAW-EB4).